Reading from the N-terminus, the 210-residue chain is DNA-directed RNA polymerases I, II, and III subunit RPABC1 (210 aa).

Met-1 carries the N-acetylmethionine modification. Lys-81 participates in a covalent cross-link: Glycyl lysine isopeptide (Lys-Gly) (interchain with G-Cter in SUMO2).

Belongs to the archaeal Rpo5/eukaryotic RPB5 RNA polymerase subunit family. As to quaternary structure, component of the RNA polymerase I (Pol I), RNA polymerase II (Pol II) and RNA polymerase III (Pol III) complexes consisting of at least 13, 12 and 17 subunits, respectively. Pol I complex consists of a ten-subunit catalytic core composed of POLR1A/RPA1, POLR1B/RPA2, POLR1C/RPAC1, POLR1D/RPAC2, POLR1H/RPA12, POLR2E/RPABC1, POLR2F/RPABC2, POLR2H/RPABC3, POLR2K/RPABC4 and POLR2L/RPABC5; a mobile stalk subunit POLR1F/RPA43 protruding from the core and additional subunits homologous to general transcription factors POLR1E/RPA49 and POLR1G/RPA34. Part of Pol I pre-initiation complex (PIC), in which Pol I core assembles with RRN3 and promoter-bound UTBF and SL1/TIF-IB complex. Pol II complex contains a ten-subunit catalytic core composed of POLR2A/RPB1, POLR2B/RPB2, POLR2C/RPB3, POLR2I/RPB9, POLR2J/RPB11, POLR2E/RPABC1, POLR2F/RPABC2, POLR2H/RPABC3, POLR2K/RPABC4 and POLR2L/RPABC5 and a mobile stalk composed of two subunits POLR2D/RPB4 and POLR2G/RPB7. Part of Pol II(G) complex, in which Pol II core associates with an additional subunit POLR2M; unlike conventional Pol II, Pol II(G) functions as a transcriptional repressor. Part of TBP-based Pol II pre-initiation complex (PIC), in which Pol II core assembles with general transcription factors and other specific initiation factors including GTF2E1, GTF2E2, GTF2F1, GTF2F2, TCEA1, ERCC2, ERCC3, GTF2H2, GTF2H3, GTF2H4, GTF2H5, GTF2A1, GTF2A2, GTF2B and TBP; this large multi-subunit PIC complex mediates DNA unwinding and targets Pol II core to the transcription start site where the first phosphodiester bond forms. In Pol II complex, this subunit is present in 2-fold molar excess over the other subunits. Pol III complex consists of a ten-subunit catalytic core composed of POLR3A/RPC1, POLR3B/RPC2, POLR1C/RPAC1, POLR1D/RPAC2, POLR3K/RPC10, POLR2E/RPABC1, POLR2F/RPABC2, POLR2H/RPABC3, POLR2K/RPABC4 and POLR2L/RPABC5; a mobile stalk composed of two subunits POLR3H/RPC8 and CRCP/RPC9, protruding from the core and functioning primarily in transcription initiation; and additional subunits homologous to general transcription factors of the RNA polymerase II machinery, POLR3C/RPC3-POLR3F/RPC6-POLR3G/RPC7 heterotrimer required for transcription initiation and POLR3D/RPC4-POLR3E/RPC5 heterodimer involved in both transcription initiation and termination. Component of the PAQosome complex which is responsible for the biogenesis of several protein complexes and which consists of R2TP complex members RUVBL1, RUVBL2, RPAP3 and PIH1D1, URI complex members PFDN2, PFDN6, PDRG1, UXT and URI1 as well as ASDURF, POLR2E and DNAAF10/WDR92. Interacts with URI1. In terms of assembly, (Microbial infection) Interacts with HBV protein X.

The protein resides in the nucleus. It localises to the nucleolus. In terms of biological role, DNA-dependent RNA polymerase catalyzes the transcription of DNA into RNA using the four ribonucleoside triphosphates as substrates. Common component of RNA polymerases I, II and III which synthesize ribosomal RNA precursors, mRNA precursors and many functional non-coding RNAs, and small RNAs, such as 5S rRNA and tRNAs, respectively. Pol II is the central component of the basal RNA polymerase II transcription machinery. Pols are composed of mobile elements that move relative to each other. In Pol II, POLR2E/RPABC1 is part of the lower jaw surrounding the central large cleft and thought to grab the incoming DNA template. The polypeptide is DNA-directed RNA polymerases I, II, and III subunit RPABC1 (Homo sapiens (Human)).